We begin with the raw amino-acid sequence, 1846 residues long: C2 domain-containing protein (1846 aa).

Positions 16–36 are disordered; sequence NTEKEEGKNAEINENNDPNTQ. Basic and acidic residues predominate over residues 17–26; sequence TEKEEGKNAE. Residues 27-36 are compositionally biased toward polar residues; it reads INENNDPNTQ. A C2 domain is found at 497-623; sequence VPRYRQRGDI…FNEKNVRRNK (127 aa). Composition is skewed to basic and acidic residues over residues 1193–1211 and 1230–1243; these read DEHT…DNYK and KDDH…KVSK. Disordered stretches follow at residues 1193–1244, 1346–1370, 1456–1635, 1652–1692, and 1827–1846; these read DEHT…VSKS, KYTI…KKQD, KNER…KKRV, NEKM…NNER, and EEPS…VRKN. A coiled-coil region spans residues 1349–1506; sequence INEKRDDIKT…DENMKEEQKM (158 aa). Composition is skewed to basic and acidic residues over residues 1456-1474, 1481-1629, 1652-1663, and 1670-1692; these read KNER…QKDK, ESRD…MRRE, NEKMKKKEEKEE, and KEDI…NNER. Over residues 1834 to 1846 the composition is skewed to basic residues; the sequence is SPQKKKIVIVRKN.

Its subcellular location is the membrane. Its function is as follows. Binds calcium and phospholipids. Regulates microneme secretion. This Plasmodium falciparum (isolate 3D7) protein is C2 domain-containing protein.